The primary structure comprises 326 residues: Fructose-1,6-bisphosphatase class 1 (326 aa).

It belongs to the FBPase class 1 family. Homotetramer.

It localises to the cytoplasm. It carries out the reaction beta-D-fructose 1,6-bisphosphate + H2O = beta-D-fructose 6-phosphate + phosphate. The protein operates within carbohydrate biosynthesis; gluconeogenesis. The sequence is that of Fructose-1,6-bisphosphatase class 1 from Methylobacterium sp. (strain 4-46).